The following is a 465-amino-acid chain: Lysosomal dipeptide transporter MFSD1 (465 aa).

The segment at 1-23 is disordered; sequence MEEEDEEARALLAGGPDEADRGA. The Dileucine internalization motif motif lies at 11–12; the sequence is LL. A run of 12 helical transmembrane segments spans residues 39–59, 83–103, 113–133, 135–155, 170–191, 213–233, 266–286, 304–324, 331–351, 361–381, 392–412, and 418–438; these read LVHR…SYFC, LLYA…GFLI, TIIF…GGIF, AFWL…SLAV, LNLV…NMNL, ITLM…LALA, LWLI…FIGL, AINS…GLLV, IIWV…LAFT, LLGL…AFVV, FMQS…GMIL, and LFLE…VVLL.

This sequence belongs to the major facilitator superfamily. In terms of assembly, homodimer. Interacts with lysosomal protein GLMP (via lumenal domain); the interaction starts while both proteins are still in the endoplasmic reticulum and is required for stabilization of MFSD1 in lysosomes but has no direct effect on its targeting to lysosomes or transporter activity.

The protein localises to the lysosome membrane. The catalysed reaction is L-alpha-aminoacyl-L-arginine(out) = L-alpha-aminoacyl-L-arginine(in). It carries out the reaction L-arginyl-L-alpha-amino acid(out) = L-arginyl-L-alpha-amino acid(in). The enzyme catalyses L-arginyl-glycine(out) = L-arginyl-glycine(in). It catalyses the reaction L-alpha-aminoacyl-L-lysine(out) = L-alpha-aminoacyl-L-lysine(in). The catalysed reaction is L-aspartyl-L-lysine(out) = L-aspartyl-L-lysine(in). It carries out the reaction L-alanyl-L-lysine(out) = L-alanyl-L-lysine(in). The enzyme catalyses L-lysyl-L-alpha-amino acid(out) = L-lysyl-L-alpha-amino acid(in). It catalyses the reaction L-lysyl-L-alanine(out) = L-lysyl-L-alanine(in). The catalysed reaction is L-lysyl-L-lysine(out) = L-lysyl-L-lysine(in). It carries out the reaction L-lysyl-glycine(out) = L-lysyl-glycine(in). The enzyme catalyses L-alpha-aminoacyl-L-histidine(out) = L-alpha-aminoacyl-L-histidine(in). It catalyses the reaction L-histidyl-L-alpha-amino acid(out) = L-histidyl-L-alpha-amino acid(in). The catalysed reaction is L-histidyl-glycine(out) = L-histidyl-glycine(in). Its function is as follows. Lysosomal dipeptide uniporter that selectively exports lysine, arginine or histidine-containing dipeptides with a net positive charge from the lysosome lumen into the cytosol. Could play a role in a specific type of protein O-glycosylation indirectly regulating macrophages migration and tissue invasion. Also essential for liver homeostasis. In Pongo abelii (Sumatran orangutan), this protein is Lysosomal dipeptide transporter MFSD1.